We begin with the raw amino-acid sequence, 143 residues long: Sporulation-specific protein 73 (143 aa).

The protein belongs to the SPO73 family. Interacts with SPO71.

The protein resides in the cytoplasm. Its subcellular location is the prospore membrane. Required for spore wall assembly and ascus formation. Involved in the formation and elongation of prospore membranes. The chain is Sporulation-specific protein 73 from Saccharomyces cerevisiae (strain ATCC 204508 / S288c) (Baker's yeast).